We begin with the raw amino-acid sequence, 85 residues long: Augerpeptide-s6a (85 aa).

The first 20 residues, 1-20, serve as a signal peptide directing secretion; it reads MTLTMSTVVFFSLILLTLGL. Positions 21–43 are excised as a propeptide; it reads QPKDKDEGVMGRSRLGKRGLLMR. Disulfide bonds link cysteine 54-cysteine 65, cysteine 58-cysteine 70, and cysteine 64-cysteine 81.

In terms of tissue distribution, expressed by the venom duct.

It is found in the secreted. This chain is Augerpeptide-s6a, found in Terebra subulata (Chocolate spotted auger).